The chain runs to 156 residues: ATP synthase subunit b (156 aa).

The helical transmembrane segment at 7–27 (LFVQAIVFLILVLFTMKFVWP) threads the bilayer.

The protein belongs to the ATPase B chain family. As to quaternary structure, F-type ATPases have 2 components, F(1) - the catalytic core - and F(0) - the membrane proton channel. F(1) has five subunits: alpha(3), beta(3), gamma(1), delta(1), epsilon(1). F(0) has three main subunits: a(1), b(2) and c(10-14). The alpha and beta chains form an alternating ring which encloses part of the gamma chain. F(1) is attached to F(0) by a central stalk formed by the gamma and epsilon chains, while a peripheral stalk is formed by the delta and b chains.

It is found in the cell inner membrane. In terms of biological role, f(1)F(0) ATP synthase produces ATP from ADP in the presence of a proton or sodium gradient. F-type ATPases consist of two structural domains, F(1) containing the extramembraneous catalytic core and F(0) containing the membrane proton channel, linked together by a central stalk and a peripheral stalk. During catalysis, ATP synthesis in the catalytic domain of F(1) is coupled via a rotary mechanism of the central stalk subunits to proton translocation. Component of the F(0) channel, it forms part of the peripheral stalk, linking F(1) to F(0). This chain is ATP synthase subunit b, found in Paracidovorax citrulli (strain AAC00-1) (Acidovorax citrulli).